The primary structure comprises 160 residues: Putative UPF0479 protein YNL339W-B (160 aa).

2 helical membrane-spanning segments follow: residues 39–59 and 136–156; these read IVFC…KVLQ and VPMI…ISQH.

Belongs to the UPF0479 family.

It localises to the membrane. The sequence is that of Putative UPF0479 protein YNL339W-B from Saccharomyces cerevisiae (strain ATCC 204508 / S288c) (Baker's yeast).